Reading from the N-terminus, the 75-residue chain is Sec-independent protein translocase protein TatA (75 aa).

Residues 1 to 21 form a helical membrane-spanning segment; sequence MGSFSIWHWLVVLAIVLLVFG. Residues 41–75 form a disordered region; it reads KGMRDEDKPNAQLGDESRTQDASRTAQDEHDRNAR.

It belongs to the TatA/E family. In terms of assembly, the Tat system comprises two distinct complexes: a TatABC complex, containing multiple copies of TatA, TatB and TatC subunits, and a separate TatA complex, containing only TatA subunits. Substrates initially bind to the TatABC complex, which probably triggers association of the separate TatA complex to form the active translocon.

The protein localises to the cell inner membrane. Part of the twin-arginine translocation (Tat) system that transports large folded proteins containing a characteristic twin-arginine motif in their signal peptide across membranes. TatA could form the protein-conducting channel of the Tat system. In Stenotrophomonas maltophilia (strain K279a), this protein is Sec-independent protein translocase protein TatA.